We begin with the raw amino-acid sequence, 334 residues long: Protein-methionine-sulfoxide reductase catalytic subunit MsrP (334 aa).

A signal peptide (tat-type signal) is located at residues 1 to 44 (MKKNQFLKESDVTAESVFFMKRRQVLKALGISAAALSLPHAAHA). Mo-molybdopterin contacts are provided by residues N88, 91–92 (YE), C146, T181, N233, R238, and 249–251 (GIK).

Belongs to the MsrP family. In terms of assembly, heterodimer of a catalytic subunit (MsrP) and a heme-binding subunit (MsrQ). Mo-molybdopterin is required as a cofactor. Predicted to be exported by the Tat system. The position of the signal peptide cleavage has not been experimentally proven.

It is found in the periplasm. The enzyme catalyses L-methionyl-[protein] + a quinone + H2O = L-methionyl-(S)-S-oxide-[protein] + a quinol. It carries out the reaction L-methionyl-[protein] + a quinone + H2O = L-methionyl-(R)-S-oxide-[protein] + a quinol. Part of the MsrPQ system that repairs oxidized periplasmic proteins containing methionine sulfoxide residues (Met-O), using respiratory chain electrons. Thus protects these proteins from oxidative-stress damage caused by reactive species of oxygen and chlorine generated by the host defense mechanisms. MsrPQ is essential for the maintenance of envelope integrity under bleach stress, rescuing a wide series of structurally unrelated periplasmic proteins from methionine oxidation, including the primary periplasmic chaperone SurA and the lipoprotein Pal. The catalytic subunit MsrP is non-stereospecific, being able to reduce both (R-) and (S-) diastereoisomers of methionine sulfoxide. The sequence is that of Protein-methionine-sulfoxide reductase catalytic subunit MsrP from Escherichia coli O127:H6 (strain E2348/69 / EPEC).